The following is a 105-amino-acid chain: Late embryogenesis abundant protein Lea5-D (105 aa).

The disordered stretch occupies residues 48 to 67 (KVERRDAMKESSSSETRAYS). The span at 57–67 (ESSSSETRAYS) shows a compositional bias: low complexity.

It belongs to the LEA type 3 family.

In Gossypium hirsutum (Upland cotton), this protein is Late embryogenesis abundant protein Lea5-D (LEA5-D).